A 423-amino-acid polypeptide reads, in one-letter code: Galactosylceramide sulfotransferase (423 aa).

Topologically, residues Met-1 to Lys-12 are cytoplasmic. A helical; Signal-anchor for type II membrane protein transmembrane segment spans residues Ala-13 to Pro-35. The Lumenal segment spans residues Pro-36–Trp-423. Asn-66 and Asn-312 each carry an N-linked (GlcNAc...) asparagine glycan.

This sequence belongs to the galactose-3-O-sulfotransferase family. In terms of tissue distribution, expressed in brain, testis, kidney, stomach, small intestine, liver, and lung. Not detected in heart, skeletal muscle, and spleen.

The protein resides in the golgi apparatus membrane. It carries out the reaction a beta-D-galactosyl-(1&lt;-&gt;1')-N-acylsphing-4-enine + 3'-phosphoadenylyl sulfate = an N-acyl-1-beta-D-(3-O-sulfo)-galactosyl-sphing-4-enine + adenosine 3',5'-bisphosphate + H(+). It catalyses the reaction a 1-O-alkyl-2-acyl-3-O-(beta-D-galactosyl)-sn-glycerol + 3'-phosphoadenylyl sulfate = a 1-O-alkyl-2-acyl-3-(beta-D-3-sulfogalactosyl)-sn-glycerol + adenosine 3',5'-bisphosphate + H(+). The catalysed reaction is a beta-D-Gal-(1&lt;-&gt;1')-ceramide + 3'-phosphoadenylyl sulfate = 1-(3-O-sulfo-beta-D-galactosyl)-ceramide + adenosine 3',5'-bisphosphate + H(+). The enzyme catalyses a 1,2-diacyl-3-O-(beta-D-galactosyl)-sn-glycerol + 3'-phosphoadenylyl sulfate = 1,2-diacyl-3-(3-O-sulfo-beta-D-galactosyl)-sn-glycerol + adenosine 3',5'-bisphosphate + H(+). It carries out the reaction a beta-D-Gal-(1-&gt;4)-beta-D-Glc-(1&lt;-&gt;1)-Cer(d18:1(4E)) + 3'-phosphoadenylyl sulfate = beta-D-3-sulfogalactosyl-(1-&gt;4)-beta-D-glucosyl-(1&lt;-&gt;1')-N-acylsphing-4-enine + adenosine 3',5'-bisphosphate + H(+). The protein operates within lipid metabolism; sphingolipid metabolism. Its function is as follows. Catalyzes the transfer of a sulfate group to position 3 of non-reducing beta-galactosyl residues in glycerolipids and sphingolipids, therefore participates in the biosynthesis of sulfoglycolipids. Catalyzes the synthesis of galactosylceramide sulfate (sulfatide), a major lipid component of the myelin sheath and of monogalactosylalkylacylglycerol sulfate (seminolipid), present in spermatocytes. Seems to prefer beta-glycosides at the non-reducing termini of sugar chains attached to a lipid moiety. Also acts on lactosylceramide, galactosyl 1-alkyl-2-sn-glycerol and galactosyl diacylglycerol (in vitro). In Mus musculus (Mouse), this protein is Galactosylceramide sulfotransferase.